We begin with the raw amino-acid sequence, 323 residues long: Germination protease (323 aa).

A propeptide spanning residues 1–6 (MSVRTD) is cleaved from the precursor.

The protein belongs to the peptidase A25 family. Homotetramer. Autoproteolytically processed. The inactive tetrameric zymogen termed p46 autoprocesses to a smaller form termed p41, which is active only during spore germination.

The enzyme catalyses Endopeptidase action with P4 Glu or Asp, P1 preferably Glu &gt; Asp, P1' hydrophobic and P2' Ala.. Its function is as follows. Initiates the rapid degradation of small, acid-soluble proteins during spore germination. The protein is Germination protease of Clostridium tetani (strain Massachusetts / E88).